Here is a 328-residue protein sequence, read N- to C-terminus: L-lactate dehydrogenase (328 aa).

NAD(+) is bound by residues Val18, Glu39, Lys46, Tyr71, and 85-86 (GA). 2 residues coordinate substrate: Gln88 and Arg94. NAD(+)-binding positions include Ser107, 124 to 126 (AAN), and Ser149. 126–129 (NPVD) serves as a coordination point for substrate. Substrate is bound at residue 154–157 (DSAR). Arg159 and His174 together coordinate beta-D-fructose 1,6-bisphosphate. His181 acts as the Proton acceptor in catalysis. At Tyr226 the chain carries Phosphotyrosine. A substrate-binding site is contributed by Thr235.

The protein belongs to the LDH/MDH superfamily. LDH family. Homotetramer.

It is found in the cytoplasm. The enzyme catalyses (S)-lactate + NAD(+) = pyruvate + NADH + H(+). The protein operates within fermentation; pyruvate fermentation to lactate; (S)-lactate from pyruvate: step 1/1. Its activity is regulated as follows. Allosterically activated by fructose 1,6-bisphosphate (FBP). Its function is as follows. Catalyzes the conversion of lactate to pyruvate. The chain is L-lactate dehydrogenase from Streptococcus thermophilus (strain ATCC BAA-250 / LMG 18311).